A 427-amino-acid chain; its full sequence is Membrane-bound hydrogenase subunit alpha (427 aa).

Ni(2+) is bound by residues cysteine 68, cysteine 71, cysteine 374, and cysteine 377.

It belongs to the complex I 49 kDa subunit family. In terms of assembly, the membrane-bound hydrogenase complex is composed of MbhK and MbhL, and may also contain MbhJ. Ni(2+) is required as a cofactor.

The protein localises to the cell membrane. It catalyses the reaction H2 + 2 oxidized [2Fe-2S]-[ferredoxin] = 2 reduced [2Fe-2S]-[ferredoxin] + 2 H(+). Its activity is regulated as follows. Inhibited by 0.1 mM Cu(2+). Its function is as follows. Alpha subunit of a hydrogen-evolving hydrogenase that utilizes protons both as a substrate for hydrogen production and proton translocation. Acts by coupling the redox reaction via ferredoxin and iron-sulfur (Fe-S) clusters to proton translocation across the membrane thereby conserving the redox energy in a proton gradient. The chain is Membrane-bound hydrogenase subunit alpha from Pyrococcus furiosus (strain ATCC 43587 / DSM 3638 / JCM 8422 / Vc1).